Consider the following 534-residue polypeptide: MDNIYIKQALVLKEVKHVFQKLIGEDPMESMYMVDTIQRLGIEHHFEEEIEAALQKQHLIFSSHLSDFANNHKLCEVALPFRLLRQRGHYVLADVFDNLKSNKKEFREKHGEDVKGLISLYEATQLGIEGEDSLDDAGYLCHQLLHAWLTRHEEHNEAMYVAKTLQHPLHYDLSRFRDDTSILLNDFKTKREWECLEELAEINSSIVRFVNQNEITQVYKWWKDLGLNNEVKFARYQPLKWYMWPMACFTDPRFSEQRIELTKPISLVYIIDDIFDVYGTLDQLTLFTDAIKRWELASTEQLPDFMKMCLRVLYEITNDFAEKIYKKHGFNPIETLKRSWVRLLNAFLEEAHWLNSGHLPRSAEYLNNGIVSTGVHVVLVHSFFLMDYSINNEIVAIVDNVPQIIHSVAKILRLSDDLEGAKSEDQNGLDGSYIDCYMNEHQDVSAEDAQRHVAHLISCEWKRLNREILTQNQLPSSFTNFCLNAARMVPLMYHYRSNPGLSTLQEHVKLLSNNAVAGAERHVVHILCLQFVIE.

Residues D272, D276, D416, and E424 each coordinate Mg(2+). The short motif at 272-276 is the DDXXD motif element; it reads DDIFD.

The protein belongs to the terpene synthase family. Mg(2+) is required as a cofactor.

The protein localises to the plastid. The protein resides in the chloroplast. It carries out the reaction neryl diphosphate + H2O = nerol + diphosphate. It functions in the pathway secondary metabolite biosynthesis; terpenoid biosynthesis. Functionally, monoterpene synthase that catalyzes the hydrolysis of neryl diphosphate (NPP) to form nerol and diphosphate. Is specific for NPP and has no hydrolase activity toward geranyl diphosphate (GPP) or farnesyl diphosphate (FPP). The monoterpene nerol may have an insect repellent effect for the plant leaves. The protein is Neryl diphosphate diphosphatase, chloroplastic of Glycine max (Soybean).